We begin with the raw amino-acid sequence, 509 residues long: 2-isopropylmalate synthase (509 aa).

Residues 5–267 form the Pyruvate carboxyltransferase domain; the sequence is IQIFDTTLRD…QTALNLEETK (263 aa). Mn(2+) is bound by residues D14, H202, H204, and N238. Positions 391-509 are regulatory domain; that stretch reads KLETLQLQYV…AAENVEKVGN (119 aa).

This sequence belongs to the alpha-IPM synthase/homocitrate synthase family. LeuA type 1 subfamily. In terms of assembly, homodimer. It depends on Mn(2+) as a cofactor.

The protein resides in the cytoplasm. It carries out the reaction 3-methyl-2-oxobutanoate + acetyl-CoA + H2O = (2S)-2-isopropylmalate + CoA + H(+). Its pathway is amino-acid biosynthesis; L-leucine biosynthesis; L-leucine from 3-methyl-2-oxobutanoate: step 1/4. Its function is as follows. Catalyzes the condensation of the acetyl group of acetyl-CoA with 3-methyl-2-oxobutanoate (2-ketoisovalerate) to form 3-carboxy-3-hydroxy-4-methylpentanoate (2-isopropylmalate). The polypeptide is 2-isopropylmalate synthase (Staphylococcus aureus (strain USA300)).